The primary structure comprises 372 residues: MKYDLIIIGSGSVGAAAGYYATRAGLKVLMTDAHMPPHQQGSHHGDTRLIRHAYGEGEKYVPLMLRAQTLWDELSTHNEEPIFVRSGVVNLGPADSAFLANVARSAQQWQLNVERLDATALMTRWPEIRVPDNYIGLFEADSGFLRSELAITTWLRLAREAGCAQLFNSQVSHIHHDDNGVTIETSEGSYHASKALISAGTWVKALVPELPVQPVRKVFAWFKADGRYSTKNRFPAFTGEMPNGDQYYGFPAENDELKIGKHNGGQLIQAPEERKPFAAVASDGAEAFPFLRNVLPGIGGCLHGAACTYDNSPDENFIIDTLPGHENTLVITGLSGHGFKFAPVLGEIAADFALGKTSSFDLTPFRLSRFSQ.

4–34 is a binding site for FAD; that stretch reads DLIIIGSGSVGAAAGYYATRAGLKVLMTDAH. An S-8alpha-FAD cysteine modification is found at C307.

It belongs to the MSOX/MTOX family. MTOX subfamily. Monomer. FAD serves as cofactor.

The enzyme catalyses N(alpha)-methyl-L-tryptophan + O2 + H2O = L-tryptophan + formaldehyde + H2O2. Its function is as follows. Catalyzes the oxidative demethylation of N-methyl-L-tryptophan. This Salmonella dublin (strain CT_02021853) protein is N-methyl-L-tryptophan oxidase.